Consider the following 275-residue polypeptide: Ribosomal RNA small subunit methyltransferase A (275 aa).

S-adenosyl-L-methionine contacts are provided by Asn-19, Leu-21, Gly-46, Glu-71, Asp-94, and Asn-117.

The protein belongs to the class I-like SAM-binding methyltransferase superfamily. rRNA adenine N(6)-methyltransferase family. RsmA subfamily.

It is found in the cytoplasm. The catalysed reaction is adenosine(1518)/adenosine(1519) in 16S rRNA + 4 S-adenosyl-L-methionine = N(6)-dimethyladenosine(1518)/N(6)-dimethyladenosine(1519) in 16S rRNA + 4 S-adenosyl-L-homocysteine + 4 H(+). Functionally, specifically dimethylates two adjacent adenosines (A1518 and A1519) in the loop of a conserved hairpin near the 3'-end of 16S rRNA in the 30S particle. May play a critical role in biogenesis of 30S subunits. The chain is Ribosomal RNA small subunit methyltransferase A from Burkholderia mallei (strain NCTC 10247).